Reading from the N-terminus, the 326-residue chain is Ribosomal large subunit pseudouridine synthase D (326 aa).

The region spanning 18–91 (QRLDQALAEM…IPLDIVYEDE (74 aa)) is the S4 RNA-binding domain. The active site involves Asp-139.

Belongs to the pseudouridine synthase RluA family. In terms of assembly, in late stage pre-50S ribosomal subunit interacts with ObgE and DarP(YjgA).

The protein resides in the cytoplasm. It carries out the reaction uridine(1911/1915/1917) in 23S rRNA = pseudouridine(1911/1915/1917) in 23S rRNA. Its function is as follows. Responsible for synthesis of pseudouridine from uracil at positions 1911, 1915 and 1917 in 23S ribosomal RNA. Other positions are not modified. Uridine isomerization occurs as a late step during the assembly of the large ribosomal subunit. Member of a network of 50S ribosomal subunit biogenesis factors (ObgE, RluD, RsfS and DarP(YjgA)) which assembles along the 30S-50S interface, allowing 23S rRNA modification and preventing incorrect 23S rRNA structures from forming. This chain is Ribosomal large subunit pseudouridine synthase D, found in Escherichia coli (strain K12).